We begin with the raw amino-acid sequence, 379 residues long: GTP cyclohydrolase 1 type 2 homolog (379 aa).

His-64, His-65, Asp-103, His-333, and Glu-337 together coordinate a divalent metal cation.

Belongs to the GTP cyclohydrolase I type 2/NIF3 family. In terms of assembly, homohexamer.

In Mycobacterium bovis (strain ATCC BAA-935 / AF2122/97), this protein is GTP cyclohydrolase 1 type 2 homolog.